The chain runs to 213 residues: Orotate phosphoribosyltransferase (213 aa).

Position 26 (lysine 26) interacts with 5-phospho-alpha-D-ribose 1-diphosphate. 34 to 35 serves as a coordination point for orotate; the sequence is FF. 5-phospho-alpha-D-ribose 1-diphosphate is bound by residues 72 to 73, arginine 99, lysine 100, lysine 103, histidine 105, and 124 to 132; these read YK and DDVITAGTA. The orotate site is built by threonine 128 and arginine 156.

This sequence belongs to the purine/pyrimidine phosphoribosyltransferase family. PyrE subfamily. In terms of assembly, homodimer. Mg(2+) is required as a cofactor.

It carries out the reaction orotidine 5'-phosphate + diphosphate = orotate + 5-phospho-alpha-D-ribose 1-diphosphate. Its pathway is pyrimidine metabolism; UMP biosynthesis via de novo pathway; UMP from orotate: step 1/2. Catalyzes the transfer of a ribosyl phosphate group from 5-phosphoribose 1-diphosphate to orotate, leading to the formation of orotidine monophosphate (OMP). This is Orotate phosphoribosyltransferase from Vibrio atlanticus (strain LGP32) (Vibrio splendidus (strain Mel32)).